The primary structure comprises 340 residues: MRVYYDRDCDINLIKDKKVAILGYGSQGHAHALNLRDSGAKNVVVALREGSPSAKKAEAEGLKVMGIAEAAAWCDLIMFTMPDELQAETYKKYVHDNLKEGSAIAFAHGLNVHFGLIEPKPGVDVIMMAPKGPGHTVRGEYVKGGGVPCLVAVHNDATGKAMEIGLSYCSAIGGGRSGIIETNFRQECETDLFGEQAVLCGGLVELIRMGFETLVEAGYEPEMAYFECLHEVKLIVDLIYEGGIANMNYSISNTAEYGEYVSGPRILPYEETKARMKAVLTDIQTGKFVRDFMQENAVGQPFFKATRRINDEHQIEKVGEKLRGMMPWISKGKMVDRARN.

Residues 1-182 (MRVYYDRDCD…GGGRSGIIET (182 aa)) form the KARI N-terminal Rossmann domain. Residues 24–27 (YGSQ), R48, S51, S53, and 83–86 (DELQ) each bind NADP(+). H108 is an active-site residue. G134 serves as a coordination point for NADP(+). The 147-residue stretch at 183–329 (NFRQECETDL…EKLRGMMPWI (147 aa)) folds into the KARI C-terminal knotted domain. Mg(2+) is bound by residues D191, E195, E227, and E231. S252 is a binding site for substrate.

Belongs to the ketol-acid reductoisomerase family. The cofactor is Mg(2+).

It carries out the reaction (2R)-2,3-dihydroxy-3-methylbutanoate + NADP(+) = (2S)-2-acetolactate + NADPH + H(+). It catalyses the reaction (2R,3R)-2,3-dihydroxy-3-methylpentanoate + NADP(+) = (S)-2-ethyl-2-hydroxy-3-oxobutanoate + NADPH + H(+). It participates in amino-acid biosynthesis; L-isoleucine biosynthesis; L-isoleucine from 2-oxobutanoate: step 2/4. The protein operates within amino-acid biosynthesis; L-valine biosynthesis; L-valine from pyruvate: step 2/4. Functionally, involved in the biosynthesis of branched-chain amino acids (BCAA). Catalyzes an alkyl-migration followed by a ketol-acid reduction of (S)-2-acetolactate (S2AL) to yield (R)-2,3-dihydroxy-isovalerate. In the isomerase reaction, S2AL is rearranged via a Mg-dependent methyl migration to produce 3-hydroxy-3-methyl-2-ketobutyrate (HMKB). In the reductase reaction, this 2-ketoacid undergoes a metal-dependent reduction by NADPH to yield (R)-2,3-dihydroxy-isovalerate. The polypeptide is Ketol-acid reductoisomerase (NADP(+)) (Cereibacter sphaeroides (strain ATCC 17025 / ATH 2.4.3) (Rhodobacter sphaeroides)).